Consider the following 67-residue polypeptide: Conotoxin Cal12.1p2 (67 aa).

Positions 1-21 (DLITNSYTRGKPRHVTSWRNL) are excised as a propeptide.

Contains 4 disulfide bonds. As to expression, expressed by the venom duct.

Its subcellular location is the secreted. This Californiconus californicus (California cone) protein is Conotoxin Cal12.1p2.